Consider the following 364-residue polypeptide: MAHRFPALTPEQKKELSDIAQRIVANGKGILAADESVGTMGNRLQRIKVENTEENRRQFREILFTVDNSINQSIGGVILFHETLYQKDSQGKLFRNILKEKGIVVGIKLDQGGAPLAGTNKETTIQGLDGLSERCAQYKKDGVDFGKWRAVLRIADQCPSSLAIQENANTLARYASICQQNGLVPIVEPEVIPDGDHDLEHCQYVTEKVLAAVYKALNDHHVYLEGTLLKPNMVTAGHACTKKYTPEQVAMATVTALHRTVPAAVPGICFLSGGMSEEDATLNLNAINLCPLPKPWKLSFSYGRALQASALAAWGGKAENKKATQEAFMKRAVVNCQAAKGQYVHTGSSGAASTQSLFTASYTY.

A2 carries the N-acetylalanine modification. At K13 the chain carries N6-succinyllysine. Residue S36 is modified to Phosphoserine. T39 is subject to Phosphothreonine. Residue R43 coordinates beta-D-fructose 1,6-bisphosphate. S89 carries the phosphoserine modification. T119 carries the phosphothreonine modification. K121 is subject to N6-succinyllysine. S132 is modified (phosphoserine). E188 acts as the Proton acceptor in catalysis. K230 (schiff-base intermediate with dihydroxyacetone-P) is an active-site residue. Phosphoserine occurs at positions 272, 276, 299, and 301. A beta-D-fructose 1,6-bisphosphate-binding site is contributed by 272–274; that stretch reads SGG. R304 serves as a coordination point for beta-D-fructose 1,6-bisphosphate. S309 carries the post-translational modification Phosphoserine. K317 is subject to N6-succinyllysine.

It belongs to the class I fructose-bisphosphate aldolase family. As to quaternary structure, homotetramer. Interacts with BBS1, BBS2, BBS4 and BBS7. Forms a ternary complex with G6PD and TP53; this interaction is direct.

The protein localises to the cytoplasm. Its subcellular location is the cytosol. The protein resides in the cytoskeleton. It localises to the microtubule organizing center. It is found in the centrosome. The protein localises to the centriolar satellite. The catalysed reaction is beta-D-fructose 1,6-bisphosphate = D-glyceraldehyde 3-phosphate + dihydroxyacetone phosphate. It catalyses the reaction beta-D-fructose 1-phosphate = D-glyceraldehyde + dihydroxyacetone phosphate. Its pathway is carbohydrate degradation; glycolysis; D-glyceraldehyde 3-phosphate and glycerone phosphate from D-glucose: step 4/4. It functions in the pathway carbohydrate biosynthesis; gluconeogenesis. The protein operates within carbohydrate metabolism; fructose metabolism. Functionally, catalyzes the aldol cleavage of fructose 1,6-biphosphate to form two triosephosphates dihydroxyacetone phosphate and D-glyceraldehyde 3-phosphate in glycolysis as well as the reverse stereospecific aldol addition reaction in gluconeogenesis. In fructolysis, metabolizes fructose 1-phosphate derived from the phosphorylation of dietary fructose by fructokinase into dihydroxyacetone phosphate and D-glyceraldehyde. Acts as an adapter independently of its enzymatic activity, exerts a tumor suppressor role by stabilizing the ternary complex with G6PD and TP53 to inhibit G6PD activity and keep oxidative pentose phosphate metabolism in check. The chain is Fructose-bisphosphate aldolase B (ALDOB) from Oryctolagus cuniculus (Rabbit).